The sequence spans 179 residues: Large ribosomal subunit protein uL5 (179 aa).

The protein belongs to the universal ribosomal protein uL5 family. As to quaternary structure, part of the 50S ribosomal subunit; part of the 5S rRNA/L5/L18/L25 subcomplex. Contacts the 5S rRNA and the P site tRNA. Forms a bridge to the 30S subunit in the 70S ribosome.

Its function is as follows. This is one of the proteins that bind and probably mediate the attachment of the 5S RNA into the large ribosomal subunit, where it forms part of the central protuberance. In the 70S ribosome it contacts protein S13 of the 30S subunit (bridge B1b), connecting the 2 subunits; this bridge is implicated in subunit movement. Contacts the P site tRNA; the 5S rRNA and some of its associated proteins might help stabilize positioning of ribosome-bound tRNAs. This chain is Large ribosomal subunit protein uL5, found in Desulfotalea psychrophila (strain LSv54 / DSM 12343).